A 137-amino-acid chain; its full sequence is Basic phospholipase A2 homolog 4a (137 aa).

An N-terminal signal peptide occupies residues 1 to 16 (MRTLWIVTVLLVGVEG). Cystine bridges form between cysteine 42–cysteine 131, cysteine 44–cysteine 60, cysteine 59–cysteine 111, cysteine 65–cysteine 137, cysteine 66–cysteine 104, cysteine 73–cysteine 97, and cysteine 91–cysteine 102. Residues 121–133 (KKYKIYPKFFCKK) form an important for membrane-damaging activities in eukaryotes and bacteria; heparin-binding region.

This sequence belongs to the phospholipase A2 family. Group II subfamily. K49 sub-subfamily. In terms of assembly, homodimer; non-covalently linked. As to expression, expressed by the venom gland.

It is found in the secreted. Snake venom phospholipase A2 homolog that lacks enzymatic activity. Is myotoxic and displays edema-inducing activities. A model of myotoxic mechanism has been proposed: an apo Lys49-PLA2 is activated by the entrance of a hydrophobic molecule (e.g. fatty acid) at the hydrophobic channel of the protein leading to a reorientation of a monomer. This reorientation causes a transition between 'inactive' to 'active' states, causing alignment of C-terminal and membrane-docking sites (MDoS) side-by-side and putting the membrane-disruption sites (MDiS) in the same plane, exposed to solvent and in a symmetric position for both monomers. The MDoS region stabilizes the toxin on membrane by the interaction of charged residues with phospholipid head groups. Subsequently, the MDiS region destabilizes the membrane with penetration of hydrophobic residues. This insertion causes a disorganization of the membrane, allowing an uncontrolled influx of ions (i.e. calcium and sodium), and eventually triggering irreversible intracellular alterations and cell death. This is Basic phospholipase A2 homolog 4a from Bothrops asper (Terciopelo).